The following is a 433-amino-acid chain: Adenylosuccinate synthetase (433 aa).

GTP is bound by residues 11–17 (GDEGKGK) and 39–41 (GHT). The Proton acceptor role is filled by Asp12. Positions 12 and 39 each coordinate Mg(2+). Residues 12–15 (DEGK), 37–40 (NAGH), Thr134, Arg148, Asn230, Thr245, and Arg309 contribute to the IMP site. The active-site Proton donor is the His40. Substrate is bound at residue 305-311 (VTTGRKR). Residues Arg311, 337–339 (KLD), and 419–421 (GTG) contribute to the GTP site.

It belongs to the adenylosuccinate synthetase family. Homodimer. Requires Mg(2+) as cofactor.

The protein localises to the cytoplasm. It catalyses the reaction IMP + L-aspartate + GTP = N(6)-(1,2-dicarboxyethyl)-AMP + GDP + phosphate + 2 H(+). It participates in purine metabolism; AMP biosynthesis via de novo pathway; AMP from IMP: step 1/2. Plays an important role in the de novo pathway and in the salvage pathway of purine nucleotide biosynthesis. Catalyzes the first committed step in the biosynthesis of AMP from IMP. The chain is Adenylosuccinate synthetase from Saccharomyces cerevisiae (strain YJM789) (Baker's yeast).